A 321-amino-acid polypeptide reads, in one-letter code: Citrate synthase (321 aa).

Residues H248 and D306 contribute to the active site.

It belongs to the citrate synthase family.

It catalyses the reaction oxaloacetate + acetyl-CoA + H2O = citrate + CoA + H(+). It functions in the pathway carbohydrate metabolism; tricarboxylic acid cycle; isocitrate from oxaloacetate: step 1/2. The protein is Citrate synthase (gltA) of Bartonella elizabethae (Rochalimaea elizabethae).